The following is a 1220-amino-acid chain: MRKAGANRNNERQGRNLGQQGPQMSPPGPSMMYPHHHQHQHHHQHQHQHQHQHQHPHQHPHQHHHHHPHHNGVYGNAYDNIRQPQMPPHSFGQGVSGSPWNSPPQQTPMYNQGYNQMSPGTGGGYGDMGGMYRDVHGGQYPSSPSHMGGGANIPYGRNPAMHNGLPAGAPLPGGYGALPHQGAHTPMGFGRGGQPLMEHMQPSGMYGAPMMRHDGYPDTRVSPPAQVGYGAGAPVGPPPPPPMPAGPPYGGVLPGAGVGPGGPMNASRPPAGIGGGGGGGGNAGYLEMRARGMGPQMPASNASRPPRIGTPDPGMMPPNRMNQSPMMGQGLPPQVGNFMPLPGVSPSPHAMIPTTPSMGDTFPGDDANMSGSTEALYDFLHDRGLVSVDNISKFFPEGYGKDDPALKVAVDGNFCLTSLRDELRKRDSLWFLHSTLPEELLMLVQQHVEWMRNMKLEPIWVFNGLSVSGDVETFLTTEAELRARDAVWSKLEDGEIPDEVEIQEAFDQPLGEDVQMAVARYLKEELGVMAVTAPFLNWAQMVAFHKEGIADLLMGPPEMLLLPYDEMKVIVQIDVSNSSVNYLDRDRVLRALFPNHVTETNTRVAGDRLMDLGLITATHAALSSARVTLNLSMQEVYEELSTPTPKFRSIKDFINAHACSQETGKKAGLSIKHSKGRGYLRYSAVFSTKSRDTPLVYLVRVLDPDLTNADMPTNLAGVLGHLVPLSLFYMQFSGLLSVRIMTAITQSYLRDECPVSDTKDYHTTLGLLMTMRSQVIGQILKRIAHPPPIKRTECLSWVRWFQPILAPMDRPRDLIDLDEWEISDSDQLKKLDEDCLADYSIASVLSVTADASRPAVEESNRPAGRVPIRYNSKRETFLAILLKSFDFLGYFSHSTAPNDAVDGMEMECCGMDGHDRGGSVPAAYHEKDLSSMKRSEASDINFMADEGLKDYPSVYFPIYLRATIKANPLDVQASFVLLTELVRVRIINSNPCRYINPANQQVEISMDDQDTNSDSRVLLASRIACLVKLPYRRASENLPFVWAPVYSRHLCAFTVMVRAMCRCLRELVEVITSTVFLSGNSSCSLQDFAEFASILPFGDVPSTIGGLLLHYVLVFPSDYQANLTSREERIEYLQGKFRDIPDLADHLHLVMSFTLQALYLINAYMLNDKETIVAKDQLTGTIVEDTIEMMWQKWRDHIDDNPPGDIHNLYPPRHQEPIPH.

A disordered region spans residues 1-107; it reads MRKAGANRNN…SPWNSPPQQT (107 aa). The segment covering 34-70 has biased composition (basic residues); sequence PHHHQHQHHHQHQHQHQHQHQHPHQHPHQHHHHHPHH.

The protein belongs to the XPG/RAD2 endonuclease family. Forms a complex composed of at least MKT1L, PBP1, XAC1 and LSM12.

The protein localises to the cytoplasm. Functionally, involved in post-transcriptional regulation of gene expression. This chain is Post-transcriptional regulator MKT1L, found in Trypanosoma brucei brucei (strain 927/4 GUTat10.1).